The following is a 334-amino-acid chain: N-acetyl-gamma-glutamyl-phosphate reductase (334 aa).

The active site involves cysteine 154.

The protein belongs to the NAGSA dehydrogenase family. Type 1 subfamily.

It is found in the cytoplasm. The enzyme catalyses N-acetyl-L-glutamate 5-semialdehyde + phosphate + NADP(+) = N-acetyl-L-glutamyl 5-phosphate + NADPH + H(+). The protein operates within amino-acid biosynthesis; L-arginine biosynthesis; N(2)-acetyl-L-ornithine from L-glutamate: step 3/4. Its function is as follows. Catalyzes the NADPH-dependent reduction of N-acetyl-5-glutamyl phosphate to yield N-acetyl-L-glutamate 5-semialdehyde. This Buchnera aphidicola subsp. Schizaphis graminum (strain Sg) protein is N-acetyl-gamma-glutamyl-phosphate reductase.